A 392-amino-acid polypeptide reads, in one-letter code: Probable tRNA sulfurtransferase (392 aa).

The region spanning 61–168 (DEALKLLSKV…EFTYIYSEII (108 aa)) is the THUMP domain. Residues 185–186 (LL), 210–211 (HF), Arg267, Gly289, and Gln298 each bind ATP.

This sequence belongs to the ThiI family.

It localises to the cytoplasm. It catalyses the reaction [ThiI sulfur-carrier protein]-S-sulfanyl-L-cysteine + a uridine in tRNA + 2 reduced [2Fe-2S]-[ferredoxin] + ATP + H(+) = [ThiI sulfur-carrier protein]-L-cysteine + a 4-thiouridine in tRNA + 2 oxidized [2Fe-2S]-[ferredoxin] + AMP + diphosphate. It carries out the reaction [ThiS sulfur-carrier protein]-C-terminal Gly-Gly-AMP + S-sulfanyl-L-cysteinyl-[cysteine desulfurase] + AH2 = [ThiS sulfur-carrier protein]-C-terminal-Gly-aminoethanethioate + L-cysteinyl-[cysteine desulfurase] + A + AMP + 2 H(+). It participates in cofactor biosynthesis; thiamine diphosphate biosynthesis. Its function is as follows. Catalyzes the ATP-dependent transfer of a sulfur to tRNA to produce 4-thiouridine in position 8 of tRNAs, which functions as a near-UV photosensor. Also catalyzes the transfer of sulfur to the sulfur carrier protein ThiS, forming ThiS-thiocarboxylate. This is a step in the synthesis of thiazole, in the thiamine biosynthesis pathway. The sulfur is donated as persulfide by IscS. This chain is Probable tRNA sulfurtransferase, found in Acetivibrio thermocellus (strain ATCC 27405 / DSM 1237 / JCM 9322 / NBRC 103400 / NCIMB 10682 / NRRL B-4536 / VPI 7372) (Clostridium thermocellum).